A 197-amino-acid chain; its full sequence is Holliday junction branch migration complex subunit RuvA (197 aa).

The segment at 1–64 (MYEYIKGKYI…EDFIGIYGFL (64 aa)) is domain I. The segment at 65–143 (TKDELSMFKL…IDISEEDDEQ (79 aa)) is domain II. Residues 144-148 (IINKV) form a flexible linker region. Residues 149-197 (TDDKKVLEAVAALVTLGYSEKEASKVINLCDKNNSLEQIIKEALKHLMK) are domain III.

It belongs to the RuvA family. In terms of assembly, homotetramer. Forms an RuvA(8)-RuvB(12)-Holliday junction (HJ) complex. HJ DNA is sandwiched between 2 RuvA tetramers; dsDNA enters through RuvA and exits via RuvB. An RuvB hexamer assembles on each DNA strand where it exits the tetramer. Each RuvB hexamer is contacted by two RuvA subunits (via domain III) on 2 adjacent RuvB subunits; this complex drives branch migration. In the full resolvosome a probable DNA-RuvA(4)-RuvB(12)-RuvC(2) complex forms which resolves the HJ.

The protein resides in the cytoplasm. Its function is as follows. The RuvA-RuvB-RuvC complex processes Holliday junction (HJ) DNA during genetic recombination and DNA repair, while the RuvA-RuvB complex plays an important role in the rescue of blocked DNA replication forks via replication fork reversal (RFR). RuvA specifically binds to HJ cruciform DNA, conferring on it an open structure. The RuvB hexamer acts as an ATP-dependent pump, pulling dsDNA into and through the RuvAB complex. HJ branch migration allows RuvC to scan DNA until it finds its consensus sequence, where it cleaves and resolves the cruciform DNA. The polypeptide is Holliday junction branch migration complex subunit RuvA (Clostridium botulinum (strain Loch Maree / Type A3)).